The following is a 340-amino-acid chain: DNA-directed RNA polymerase subunit alpha (340 aa).

The alpha N-terminal domain (alpha-NTD) stretch occupies residues 1 to 233 (MYRNWRDLIS…EQLSIFINFD (233 aa)). The tract at residues 251–340 (INENLYRSVD…RLRGERKDEE (90 aa)) is alpha C-terminal domain (alpha-CTD).

Belongs to the RNA polymerase alpha chain family. In terms of assembly, homodimer. The RNAP catalytic core consists of 2 alpha, 1 beta, 1 beta' and 1 omega subunit. When a sigma factor is associated with the core the holoenzyme is formed, which can initiate transcription.

The catalysed reaction is RNA(n) + a ribonucleoside 5'-triphosphate = RNA(n+1) + diphosphate. In terms of biological role, DNA-dependent RNA polymerase catalyzes the transcription of DNA into RNA using the four ribonucleoside triphosphates as substrates. In Geobacter sulfurreducens (strain ATCC 51573 / DSM 12127 / PCA), this protein is DNA-directed RNA polymerase subunit alpha.